We begin with the raw amino-acid sequence, 122 residues long: Small ribosomal subunit protein uS13 (122 aa).

Residues 93-122 (RKGLPVRGQTTKNNARTRKGKRKTVGSASK) form a disordered region. A compositionally biased stretch (basic residues) spans 107–116 (ARTRKGKRKT).

It belongs to the universal ribosomal protein uS13 family. Part of the 30S ribosomal subunit. Forms a loose heterodimer with protein S19. Forms two bridges to the 50S subunit in the 70S ribosome.

Located at the top of the head of the 30S subunit, it contacts several helices of the 16S rRNA. In the 70S ribosome it contacts the 23S rRNA (bridge B1a) and protein L5 of the 50S subunit (bridge B1b), connecting the 2 subunits; these bridges are implicated in subunit movement. Contacts the tRNAs in the A and P-sites. The polypeptide is Small ribosomal subunit protein uS13 (Wolinella succinogenes (strain ATCC 29543 / DSM 1740 / CCUG 13145 / JCM 31913 / LMG 7466 / NCTC 11488 / FDC 602W) (Vibrio succinogenes)).